Consider the following 104-residue polypeptide: Co-chaperonin GroES (104 aa).

It belongs to the GroES chaperonin family. In terms of assembly, heptamer of 7 subunits arranged in a ring. Interacts with the chaperonin GroEL.

The protein localises to the cytoplasm. Together with the chaperonin GroEL, plays an essential role in assisting protein folding. The GroEL-GroES system forms a nano-cage that allows encapsulation of the non-native substrate proteins and provides a physical environment optimized to promote and accelerate protein folding. GroES binds to the apical surface of the GroEL ring, thereby capping the opening of the GroEL channel. In Acidiphilium cryptum (strain JF-5), this protein is Co-chaperonin GroES.